The following is a 393-amino-acid chain: Exosome complex component RRP45 (393 aa).

An ARE binding region spans residues 1 to 268 (MRDTPLSNCE…SEITELINKA (268 aa)).

It belongs to the RNase PH family. As to quaternary structure, component of the RNA exosome complex.

It localises to the cytoplasm. Its subcellular location is the nucleus. The protein resides in the nucleolus. It is found in the nucleoplasm. Its function is as follows. Non-catalytic component of the RNA exosome complex which has 3'-&gt;5' exoribonuclease activity and participates in a multitude of cellular RNA processing and degradation events. In the nucleus, the RNA exosome complex is involved in proper maturation of stable RNA species such as rRNA, snRNA and snoRNA, in the elimination of RNA processing by-products and non-coding 'pervasive' transcripts, such as antisense RNA species and promoter-upstream transcripts (PROMPTs), and of mRNAs with processing defects, thereby limiting or excluding their export to the cytoplasm. In the cytoplasm, the RNA exosome complex is involved in general mRNA turnover and specifically degrades inherently unstable mRNAs containing AU-rich elements (AREs) within their 3' untranslated regions, and in RNA surveillance pathways, preventing translation of aberrant mRNAs. The sequence is that of Exosome complex component RRP45 from Danio rerio (Zebrafish).